Consider the following 244-residue polypeptide: Cytochrome c1 (244 aa).

The signal sequence occupies residues 1–19; the sequence is MRKLILATFLLLAPTALLA. Heme c-binding residues include Cys-50, Cys-53, and His-54. Residues 220 to 240 traverse the membrane as a helical segment; sequence YVLLFLGFLFILAYLLKKEYW.

In terms of assembly, the main subunits of complex b-c1 are: cytochrome b, cytochrome c1 and the Rieske protein. Post-translationally, binds 1 heme c group covalently per subunit.

Its subcellular location is the cell membrane. In terms of biological role, component of the ubiquinol-cytochrome c reductase complex (complex III or cytochrome b-c1 complex), which is a respiratory chain that generates an electrochemical potential coupled to ATP synthesis. c1 functions as an electron donor to cytochrome c. The chain is Cytochrome c1 (petC) from Allochromatium vinosum (strain ATCC 17899 / DSM 180 / NBRC 103801 / NCIMB 10441 / D) (Chromatium vinosum).